Here is a 249-residue protein sequence, read N- to C-terminus: Suppressor of silencing P0 (249 aa).

In terms of domain architecture, F-box-like spans 63–67 (LPFHL).

It belongs to the polerovirus P0 protein family. Interacts (via F-box-like domain) with host AGO1; this interaction targets AGO1 for degradation, and thereby suppresses the silencing function of the latter. Interacts (via F-box-like domain) with host ASK1 and ASK2 (SKP proteins); these interactions are essential for viral pathogenicity. Part of a SCF P0 complex composed of P0 and the host proteins SKP and CUL1.

Functionally, suppressor of RNA-mediated gene silencing, also known as post-transcriptional gene silencing (PTGS), a mechanism of plant viral defense that limits the accumulation of viral RNAs. The P0 protein suppresses local PTGS using its F-box-like domain to mediate destabilization and degradation of the AGO1 protein. This Turnip yellows virus (isolate FL-1) (TuYV) protein is Suppressor of silencing P0.